The chain runs to 155 residues: Eosinophil cationic protein (155 aa).

Residues 1 to 25 (MGLKLLESRLCLLLSLGLVLMLASC) form the signal peptide. His38 acts as the Proton acceptor in catalysis. Cystine bridges form between Cys47-Cys106, Cys61-Cys118, Cys79-Cys133, and Cys86-Cys94. 62 to 66 (KDINT) is a substrate binding site. Asn88 and Asn107 each carry an N-linked (GlcNAc...) asparagine glycan. The active-site Proton donor is His150.

This sequence belongs to the pancreatic ribonuclease family.

Its subcellular location is the cytoplasmic granule. In terms of biological role, cytotoxin and helminthotoxin with ribonuclease activity. Possesses a wide variety of biological activities. In Rattus norvegicus (Rat), this protein is Eosinophil cationic protein (Rnase3).